Reading from the N-terminus, the 490-residue chain is Cytochrome P450 2C25 (490 aa).

Cys435 is a binding site for heme.

Belongs to the cytochrome P450 family. Heme is required as a cofactor.

The protein resides in the endoplasmic reticulum membrane. It is found in the microsome membrane. It catalyses the reaction an organic molecule + reduced [NADPH--hemoprotein reductase] + O2 = an alcohol + oxidized [NADPH--hemoprotein reductase] + H2O + H(+). In terms of biological role, catalyzes the hydroxylation of tolbutamide and the N-demethylation of aminopyrine and benzphetamine. Also has testosterone hydroxylase (16 beta) activity. This is Cytochrome P450 2C25 (CYP2C25) from Mesocricetus auratus (Golden hamster).